Reading from the N-terminus, the 470-residue chain is L-seryl-tRNA(Sec) selenium transferase (470 aa).

An N6-(pyridoxal phosphate)lysine modification is found at Lys292.

Belongs to the SelA family. The cofactor is pyridoxal 5'-phosphate.

Its subcellular location is the cytoplasm. It carries out the reaction L-seryl-tRNA(Sec) + selenophosphate + H(+) = L-selenocysteinyl-tRNA(Sec) + phosphate. The protein operates within aminoacyl-tRNA biosynthesis; selenocysteinyl-tRNA(Sec) biosynthesis; selenocysteinyl-tRNA(Sec) from L-seryl-tRNA(Sec) (bacterial route): step 1/1. Functionally, converts seryl-tRNA(Sec) to selenocysteinyl-tRNA(Sec) required for selenoprotein biosynthesis. This Moorella thermoacetica (strain ATCC 39073 / JCM 9320) protein is L-seryl-tRNA(Sec) selenium transferase.